The sequence spans 394 residues: 8-amino-7-oxononanoate synthase (394 aa).

Arg21 is a binding site for substrate. Residue 112–113 (GY) coordinates pyridoxal 5'-phosphate. His137 is a binding site for substrate. Pyridoxal 5'-phosphate is bound by residues Ser183, His211, and Thr239. The residue at position 242 (Lys242) is an N6-(pyridoxal phosphate)lysine. Position 358 (Thr358) interacts with substrate.

The protein belongs to the class-II pyridoxal-phosphate-dependent aminotransferase family. BioF subfamily. Homodimer. Requires pyridoxal 5'-phosphate as cofactor.

The enzyme catalyses 6-carboxyhexanoyl-[ACP] + L-alanine + H(+) = (8S)-8-amino-7-oxononanoate + holo-[ACP] + CO2. Its pathway is cofactor biosynthesis; biotin biosynthesis. Functionally, catalyzes the decarboxylative condensation of pimeloyl-[acyl-carrier protein] and L-alanine to produce 8-amino-7-oxononanoate (AON), [acyl-carrier protein], and carbon dioxide. The chain is 8-amino-7-oxononanoate synthase from Burkholderia cenocepacia (strain ATCC BAA-245 / DSM 16553 / LMG 16656 / NCTC 13227 / J2315 / CF5610) (Burkholderia cepacia (strain J2315)).